The following is a 124-amino-acid chain: Glycine cleavage system H protein (124 aa).

In terms of domain architecture, Lipoyl-binding spans 22-104 (LVITGITDHA…YGKGWIYKIK (83 aa)). Lys-63 is modified (N6-lipoyllysine).

It belongs to the GcvH family. As to quaternary structure, the glycine cleavage system is composed of four proteins: P, T, L and H. (R)-lipoate serves as cofactor.

Functionally, the glycine cleavage system catalyzes the degradation of glycine. The H protein shuttles the methylamine group of glycine from the P protein to the T protein. The polypeptide is Glycine cleavage system H protein (Acinetobacter baumannii (strain ACICU)).